We begin with the raw amino-acid sequence, 754 residues long: 5-methyltetrahydropteroyltriglutamate--homocysteine methyltransferase (754 aa).

5-methyltetrahydropteroyltri-L-glutamate contacts are provided by residues 17-20 and K117; that span reads RELK. Residues 431 to 433 and E484 contribute to the L-homocysteine site; that span reads IGS. L-methionine is bound by residues 431–433 and E484; that span reads IGS. 5-methyltetrahydropteroyltri-L-glutamate is bound by residues 515 to 516 and W561; that span reads RC. D599 contributes to the L-homocysteine binding site. Residue D599 participates in L-methionine binding. E605 is a 5-methyltetrahydropteroyltri-L-glutamate binding site. Residues H641, C643, and E665 each contribute to the Zn(2+) site. H694 (proton donor) is an active-site residue. Position 726 (C726) interacts with Zn(2+).

Belongs to the vitamin-B12 independent methionine synthase family. Zn(2+) serves as cofactor.

It carries out the reaction 5-methyltetrahydropteroyltri-L-glutamate + L-homocysteine = tetrahydropteroyltri-L-glutamate + L-methionine. The protein operates within amino-acid biosynthesis; L-methionine biosynthesis via de novo pathway; L-methionine from L-homocysteine (MetE route): step 1/1. Catalyzes the transfer of a methyl group from 5-methyltetrahydrofolate to homocysteine resulting in methionine formation. The chain is 5-methyltetrahydropteroyltriglutamate--homocysteine methyltransferase from Salmonella agona (strain SL483).